A 431-amino-acid chain; its full sequence is Adenylosuccinate lyase (431 aa).

N(6)-(1,2-dicarboxyethyl)-AMP is bound by residues 4–5, 67–69, and 93–94; these read RY, RHD, and TS. Residue His141 is the Proton donor/acceptor of the active site. Gln212 provides a ligand contact to N(6)-(1,2-dicarboxyethyl)-AMP. Ser262 serves as the catalytic Proton donor/acceptor. N(6)-(1,2-dicarboxyethyl)-AMP is bound by residues Ser263, 268–270, Asn276, and 307–311; these read KRN and SAERI.

Belongs to the lyase 1 family. Adenylosuccinate lyase subfamily. In terms of assembly, homodimer and homotetramer. Residues from neighboring subunits contribute catalytic and substrate-binding residues to each active site.

It catalyses the reaction N(6)-(1,2-dicarboxyethyl)-AMP = fumarate + AMP. The enzyme catalyses (2S)-2-[5-amino-1-(5-phospho-beta-D-ribosyl)imidazole-4-carboxamido]succinate = 5-amino-1-(5-phospho-beta-D-ribosyl)imidazole-4-carboxamide + fumarate. It functions in the pathway purine metabolism; AMP biosynthesis via de novo pathway; AMP from IMP: step 2/2. It participates in purine metabolism; IMP biosynthesis via de novo pathway; 5-amino-1-(5-phospho-D-ribosyl)imidazole-4-carboxamide from 5-amino-1-(5-phospho-D-ribosyl)imidazole-4-carboxylate: step 2/2. In terms of biological role, catalyzes two reactions in de novo purine nucleotide biosynthesis. Catalyzes the breakdown of 5-aminoimidazole- (N-succinylocarboxamide) ribotide (SAICAR or 2-[5-amino-1-(5-phospho-beta-D-ribosyl)imidazole-4-carboxamido]succinate) to 5-aminoimidazole-4-carboxamide ribotide (AICAR or 5-amino-1-(5-phospho-beta-D-ribosyl)imidazole-4-carboxamide) and fumarate, and of adenylosuccinate (ADS or N(6)-(1,2-dicarboxyethyl)-AMP) to adenosine monophosphate (AMP) and fumarate. The protein is Adenylosuccinate lyase (purB) of Staphylococcus epidermidis (strain ATCC 35984 / DSM 28319 / BCRC 17069 / CCUG 31568 / BM 3577 / RP62A).